A 935-amino-acid polypeptide reads, in one-letter code: Mannosyltransferase regulator 14 (935 aa).

At 1–21 the chain is on the cytoplasmic side; sequence MMLSLRRFSMYVLRSLRLHFK. The chain crosses the membrane as a helical; Signal-anchor for type II membrane protein span at residues 22 to 42; sequence KIIITLLTIQLLFITIFVLGG. The Lumenal segment spans residues 43–935; it reads RSSIIDGNWK…NNIFGSDQKY (893 aa). The short motif at 498–500 is the DXD element; that stretch reads DHD.

This sequence belongs to the MNN4 family.

The protein localises to the golgi apparatus membrane. Plays a role in N-glycan mannosylphosphorylation and has partially redundant function with MNN4. The chain is Mannosyltransferase regulator 14 from Saccharomyces cerevisiae (strain ATCC 204508 / S288c) (Baker's yeast).